The primary structure comprises 1865 residues: Transcription initiation factor TFIID subunit 1 (1865 aa).

The tract at residues 1-27 is disordered; it reads MLLPATGASRSAAIMSDTDSDEDSSGG. Residues 1–409 enclose the Protein kinase 1 domain; the sequence is MLLPATGASR…VTQLHWEDDI (409 aa). The residue at position 131 (Ser131) is a Phosphoserine; by autocatalysis. Positions 144 to 199 are disordered; the sequence is EDIDCKLMPPPPPPPGPVKKEKDQDGLTGEKVDFSSSSDSESEMGPQEAAQAESKD. The segment covering 151–160 has biased composition (pro residues); it reads MPPPPPPPGP. A compositionally biased stretch (basic and acidic residues) spans 161-176; sequence VKKEKDQDGLTGEKVD. Position 302 is a phosphoserine; by autocatalysis (Ser302). The disordered stretch occupies residues 509 to 530; the sequence is PDEKEEATSNSPSKENKKESSL. The histone acetyltransferase (HAT) stretch occupies residues 512–971; sequence KEEATSNSPS…KIPNKPTQQK (460 aa). Lys539 is subject to N6-acetyllysine. Residues Lys544 and Lys557 each participate in a glycyl lysine isopeptide (Lys-Gly) (interchain with G-Cter in SUMO2) cross-link. Disordered regions lie at residues 964–983 and 1228–1252; these read PNKP…KKTV and RLKR…MKER. Composition is skewed to basic and acidic residues over residues 969–978 and 1228–1244; these read QQKDDKEPQP and RLKR…PPEK. Residues 1190-1268 constitute a DNA-binding region (HMG box); the sequence is VRIRTTKDEE…CGACGAIGHM (79 aa). The interaction with ASF1A and ASF1B stretch occupies residues 1337-1624; sequence VLKFPKQQLP…TAKEAALEEA (288 aa). Residues 1346–1353 carry the Nuclear localization signal motif; sequence PPKKKRRV. Bromo domains follow at residues 1371 to 1479 and 1493 to 1602; these read RRRT…LKEK and LLDD…LTEY. Residues 1420 to 1865 form the Protein kinase 2 domain; the sequence is MDLQTLRENV…AGDSDMDSDE (446 aa). The interval 1625–1865 is disordered; sequence ELESLDPMTP…AGDSDMDSDE (241 aa). Positions 1633–1642 are enriched in pro residues; it reads TPGPYTPQPP. The segment covering 1646–1682 has biased composition (polar residues); that stretch reads DNSTSLSVSRDASVYQDESNMSVLDIPSATSEKQLTQ. Phosphoserine is present on residues Ser1664 and Ser1667. Acidic residues-rich tracts occupy residues 1683 to 1697 and 1715 to 1730; these read EGED…EEEG and EGED…EEGD. Over residues 1739 to 1751 the composition is skewed to low complexity; that stretch reads SESGSDSDVGSGS. 3 positions are modified to phosphoserine: Ser1773, Ser1776, and Ser1794. Over residues 1804-1814 the composition is skewed to polar residues; the sequence is KSNTQDTSFSS. Over residues 1820–1829 the composition is skewed to acidic residues; that stretch reads VSEEEEDEEE. At Ser1821 the chain carries Phosphoserine. Residues 1832-1841 are compositionally biased toward polar residues; the sequence is SGPSVLSQVH.

The protein belongs to the TAF1 family. In terms of assembly, component of the TFIID basal transcription factor complex, composed of TATA-box-binding protein TBP, and a number of TBP-associated factors (TAFs), including TAF1, TAF2, TAF3, TAF4, TAF5, TAF6, TAF7, TAF8, TAF9, TAF10, TAF11, TAF12 and TAF13. Interacts with TAF7; the interaction is direct. TAF1, when part of the TFIID complex, interacts with C-terminus of TP53. Part of a TFIID-containing RNA polymerase II pre-initiation complex that is composed of TBP and at least GTF2A1, GTF2A2, GTF2E1, GTF2E2, GTF2F1, GTF2H2, GTF2H3, GTF2H4, GTF2H5, GTF2B, TCEA1, ERCC2, ERCC3, TAF1, TAF2, TAF3, TAF4, TAF5, TAF6, TAF7, TAF8, TAF9, TAF10, TAF11, TAF12 and TAF13. Component of some MLL1/MLL complex, at least composed of the core components KMT2A/MLL1, ASH2L, HCFC1/HCF1, WDR5 and RBBP5, as well as the facultative components BACC1, CHD8, E2F6, HSP70, INO80C, KANSL1, LAS1L, MAX, MCRS1, MGA, KAT8/MOF, PELP1, PHF20, PRP31, RING2, RUVB1/TIP49A, RUVB2/TIP49B, SENP3, TAF1, TAF4, TAF6, TAF7, TAF9 and TEX10. RB1 interacts with the N-terminal domain of TAF1. Interacts with ASF1A and ASF1B. Interacts (via bromo domains) with acetylated lysine residues on the N-terminus of histone H1.4, H2A, H2B, H3 and H4 (in vitro). Requires Mg(2+) as cofactor. Phosphorylated by casein kinase II in vitro.

The protein resides in the nucleus. It catalyses the reaction L-seryl-[protein] + ATP = O-phospho-L-seryl-[protein] + ADP + H(+). The catalysed reaction is L-threonyl-[protein] + ATP = O-phospho-L-threonyl-[protein] + ADP + H(+). It carries out the reaction L-lysyl-[protein] + acetyl-CoA = N(6)-acetyl-L-lysyl-[protein] + CoA + H(+). With respect to regulation, autophosphorylates on Ser residues. Inhibited by retinoblastoma tumor suppressor protein, RB1. Binding to TAF1 or CIITA inhibits the histone acetyltransferase activity. The TFIID basal transcription factor complex plays a major role in the initiation of RNA polymerase II (Pol II)-dependent transcription. TFIID recognizes and binds promoters with or without a TATA box via its subunit TBP, a TATA-box-binding protein, and promotes assembly of the pre-initiation complex (PIC). The TFIID complex consists of TBP and TBP-associated factors (TAFs), including TAF1, TAF2, TAF3, TAF4, TAF5, TAF6, TAF7, TAF8, TAF9, TAF10, TAF11, TAF12 and TAF13. TAF1 is the largest component and core scaffold of the TFIID complex, involved in nucleating complex assembly. TAF1 forms a promoter DNA binding subcomplex of TFIID, together with TAF7 and TAF2. Contains novel N- and C-terminal Ser/Thr kinase domains which can autophosphorylate or transphosphorylate other transcription factors. Phosphorylates TP53 on 'Thr-55' which leads to MDM2-mediated degradation of TP53. Phosphorylates GTF2A1 and GTF2F1 on Ser residues. Possesses DNA-binding activity. Essential for progression of the G1 phase of the cell cycle. The sequence is that of Transcription initiation factor TFIID subunit 1 from Mesocricetus auratus (Golden hamster).